The chain runs to 354 residues: Serum paraoxonase/lactonase 3 (354 aa).

Cysteines 42 and 352 form a disulfide. Residue asparagine 50 is glycosylated (N-linked (GlcNAc...) asparagine). Ca(2+) is bound by residues glutamate 53 and aspartate 54. Histidine 114 serves as the catalytic Proton acceptor. Isoleucine 116 contributes to the Ca(2+) binding site. A Phosphoserine modification is found at serine 165. Ca(2+) contacts are provided by asparagine 167, aspartate 168, asparagine 223, aspartate 268, and asparagine 269. Asparagine 269 and asparagine 323 each carry an N-linked (GlcNAc...) asparagine glycan.

This sequence belongs to the paraoxonase family. In terms of assembly, homodimer. Ca(2+) serves as cofactor. Glycosylated. Post-translationally, the signal sequence is not cleaved.

Its subcellular location is the secreted. The protein resides in the extracellular space. It catalyses the reaction a phenyl acetate + H2O = a phenol + acetate + H(+). It carries out the reaction An aryl dialkyl phosphate + H2O = dialkyl phosphate + an aryl alcohol.. The catalysed reaction is an N-acyl-L-homoserine lactone + H2O = an N-acyl-L-homoserine + H(+). In terms of biological role, has low activity towards the organophosphate paraxon and aromatic carboxylic acid esters. Rapidly hydrolyzes lactones such as statin prodrugs (e.g. lovastatin). Hydrolyzes aromatic lactones and 5- or 6-member ring lactones with aliphatic substituents but not simple lactones or those with polar substituents. The chain is Serum paraoxonase/lactonase 3 (Pon3) from Mus musculus (Mouse).